Here is a 57-residue protein sequence, read N- to C-terminus: uncharacterized protein (57 aa).

A run of 2 helical transmembrane segments spans residues 2 to 22 (LLVV…LRSV) and 29 to 49 (GFLL…MTVI).

It localises to the cell membrane. This is an uncharacterized protein from Bacillus subtilis (strain 168).